The following is a 716-amino-acid chain: Probable basic-leucine zipper transcription factor O (716 aa).

Residues 20–142 are a coiled coil; the sequence is LLDDFSQLQQ…YQQRQQQYQD (123 aa). The tract at residues 173–233 is disordered; sequence SINYNMNNNN…NNKTTDNINN (61 aa). The bZIP domain occupies 381-444; it reads KSTESIKKMN…SVDLMKPSND (64 aa). A basic motif region spans residues 387-403; it reads KKMNQNKASRNYRQKKK. The leucine-zipper stretch occupies residues 406 to 413; sequence IKEIEDKL.

It belongs to the bZIP family.

The protein localises to the nucleus. In terms of biological role, probable transcriptional regulator. This chain is Probable basic-leucine zipper transcription factor O (bzpO), found in Dictyostelium discoideum (Social amoeba).